A 441-amino-acid chain; its full sequence is MQNDVLARWEQVLIRLEKQVNKHSFETWLTKCKPVAFYDNTIIIEVPDHFSKSWLADRYAPIIKQAYESIMHQEISLQFILAGQEVDQPKPKERSSEETYINILNPRYTFDTFVVGNSNRFAHAASLAVAESPAKAYNPLFIYGGVGLGKTHLMHAIGHYILENNQNLKVAYVTSEKFTNELINSIRDDQTVEFRNKYRSMDILLIDDIQFLEKKERTQEEFFHTFNTLYEANKQIIISSDRPPKEIATLEDRLRSRFEWGLITDMQSPDYETRVAILRKKAQLEAIKNIPDETIAYIADKIQSNIRELEGALIRVSAFSSLEQRDATPQLAAEVLKDVIAPSKPKIITTPLIMQTVADFYGLRIEDLKAKKRTRSVAFPRQVAMYLARELTDLSLPKIGDEFGGRDHTTVLHACDKITTDLSSDPVLQETIKELKKRIGE.

The interval 1–80 is domain I, interacts with DnaA modulators; sequence MQNDVLARWE…MHQEISLQFI (80 aa). The domain II stretch occupies residues 80-102; sequence ILAGQEVDQPKPKERSSEETYIN. Residues 103–320 are domain III, AAA+ region; sequence ILNPRYTFDT…GALIRVSAFS (218 aa). Positions 147, 149, 150, and 151 each coordinate ATP. Residues 321 to 441 are domain IV, binds dsDNA; the sequence is SLEQRDATPQ…IKELKKRIGE (121 aa).

It belongs to the DnaA family. Oligomerizes as a right-handed, spiral filament on DNA at oriC.

It is found in the cytoplasm. Plays an essential role in the initiation and regulation of chromosomal replication. ATP-DnaA binds to the origin of replication (oriC) to initiate formation of the DNA replication initiation complex once per cell cycle. Binds the DnaA box (a 9 base pair repeat at the origin) and separates the double-stranded (ds)DNA. Forms a right-handed helical filament on oriC DNA; dsDNA binds to the exterior of the filament while single-stranded (ss)DNA is stabiized in the filament's interior. The ATP-DnaA-oriC complex binds and stabilizes one strand of the AT-rich DNA unwinding element (DUE), permitting loading of DNA polymerase. After initiation quickly degrades to an ADP-DnaA complex that is not apt for DNA replication. Binds acidic phospholipids. The protein is Chromosomal replication initiator protein DnaA of Desulforamulus reducens (strain ATCC BAA-1160 / DSM 100696 / MI-1) (Desulfotomaculum reducens).